A 280-amino-acid polypeptide reads, in one-letter code: Acyl-[acyl-carrier-protein]--UDP-N-acetylglucosamine O-acyltransferase (280 aa).

This sequence belongs to the transferase hexapeptide repeat family. LpxA subfamily. As to quaternary structure, homotrimer.

It localises to the cytoplasm. It catalyses the reaction a (3R)-hydroxyacyl-[ACP] + UDP-N-acetyl-alpha-D-glucosamine = a UDP-3-O-[(3R)-3-hydroxyacyl]-N-acetyl-alpha-D-glucosamine + holo-[ACP]. It participates in glycolipid biosynthesis; lipid IV(A) biosynthesis; lipid IV(A) from (3R)-3-hydroxytetradecanoyl-[acyl-carrier-protein] and UDP-N-acetyl-alpha-D-glucosamine: step 1/6. Functionally, involved in the biosynthesis of lipid A, a phosphorylated glycolipid that anchors the lipopolysaccharide to the outer membrane of the cell. The chain is Acyl-[acyl-carrier-protein]--UDP-N-acetylglucosamine O-acyltransferase from Chlamydia trachomatis serovar L2 (strain ATCC VR-902B / DSM 19102 / 434/Bu).